Reading from the N-terminus, the 379-residue chain is Stimulator of interferon genes protein (379 aa).

The Cytoplasmic portion of the chain corresponds to 1–17 (MPHSSLHPSIPCPRGHG). Residues 1–190 (MPHSSLHPSI…TYNQHYNNLL (190 aa)) form a mediates interaction with ZDHHC1 and ZDHHC11 region. Residues 18 to 34 (AQKAALVLLSACLVTLW) traverse the membrane as a helical segment. Lys20 is covalently cross-linked (Glycyl lysine isopeptide (Lys-Gly) (interchain with G-Cter in ubiquitin)). The Lumenal portion of the chain corresponds to 35–44 (GLGEPPEHTL). A helical transmembrane segment spans residues 45–69 (RYLVLHLASLQLGLLLNGVCSLAEE). Topologically, residues 70-91 (LRHIHSRYRGSYWRTVRACLGC) are cytoplasmic. 2 S-palmitoyl cysteine lipidation sites follow: Cys88 and Cys91. The chain crosses the membrane as a helical span at residues 92-106 (PLRRGALLLLSIYFY). The Lumenal segment spans residues 107-116 (YSLPNAVGPP). Residues 117–134 (FTWMLALLGLSQALNILL) form a helical membrane-spanning segment. The Cytoplasmic portion of the chain corresponds to 135–379 (GLKGLAPAEI…KPLPLRTDFS (245 aa)). Lys150 participates in a covalent cross-link: Glycyl lysine isopeptide (Lys-Gly) (interchain with G-Cter in ubiquitin). Residues 153–340 (FNVAHGLAWS…RHLRQEEKEE (188 aa)) form a cyclic dinucleotide-binding domain (CBD) region. 2',3'-cGAMP contacts are provided by Ser162 and Tyr167. 3',3'-c-di-GMP contacts are provided by Ser162 and Tyr167. 2',3'-cUAMP is bound at residue Tyr167. Phosphothreonine is present on Thr229. A Glycyl lysine isopeptide (Lys-Gly) (interchain with G-Cter in ubiquitin) cross-link involves residue Lys236. Arg238 serves as a coordination point for 2',3'-cGAMP. Arg238 serves as a coordination point for 2',3'-cUAMP. 3',3'-c-di-GMP contacts are provided by residues 238-241 (RVYS) and Thr263. Position 241 is a phosphoserine (Ser241). A 2',3'-cGAMP-binding site is contributed by Thr263. Residue Thr263 participates in 2',3'-cUAMP binding. A Glycyl lysine isopeptide (Lys-Gly) (interchain with G-Cter in SUMO) cross-link involves residue Lys338. The C-terminal tail (CTT) stretch occupies residues 340-379 (EVTVGSLKTSAVPSTSTMSQEPELLISGMEKPLPLRTDFS). The interval 341–370 (VTVGSLKTSAVPSTSTMSQEPELLISGMEK) is disordered. A compositionally biased stretch (polar residues) spans 345–359 (SLKTSAVPSTSTMSQ). A Phosphothreonine modification is found at Thr354. Ser355 carries the post-translational modification Phosphoserine; by MAP3K7. Thr356 is subject to Phosphothreonine. A phosphoserine; by TBK1 mark is found at Ser358 and Ser366. The pLxIS motif signature appears at 363–366 (LLIS).

Belongs to the STING family. In terms of assembly, homodimer; forms a homodimer in absence of cyclic nucleotide (c-di-GMP or cGAMP); 'Lys-63'-linked ubiquitination at Lys-150 is required for homodimerization. Homotetramer; in presence of cyclic nucleotide (c-di-GMP or cGAMP), forms tetramers and higher-order oligomers through side-by-side packing. Interacts (when phosphorylated) with IRF3; following activation and phosphorylation on the pLxIS motif by TBK1, recruits IRF3. Interacts with RIGI, MAVS and SSR2. Interacts with RNF5 and TRIM56. Interacts with TBK1; when homodimer, leading to subsequent production of IFN-beta. Interacts with IFIT1 and IFIT2. Interacts with TRIM29; this interaction induces STING1 ubiquitination and subsequent degradation. Associates with the MHC-II complex. Interacts with STEEP1; interaction takes place upon cGAMP-activation and STING1 phosphorylation by MAP3K7/TAK1 and promotes STING1 translocation to COPII vesicles. Interacts with SEC24A, SEC24B, and SEC24C; promoting translocation to COPII vesicles. Interacts (when ubiquitinated) with SQSTM1; leading to relocalization to autophagosomes. Interacts with SURF4. Interacts with HNRNPA2B1. Interacts with ZDHHC1; ZDHHC1 constitutively interacts with STING1 and in presence of DNA viruses activates it by promoting its cGAMP-induced oligomerization and the recruitment of downstream signaling components. Interacts with ZDHHC11; in presence of DNA viruses promotes the recruitment of IRF3 to STING1. Interacts with TOMM70. Interacts with isoform IFI16-beta of IFI16. Interacts with TAB1; promoting recruitment of TAB1 to the endoplasmic reticulum membrane and subsequent activation of MAP3K7/TAK1. Interacts (via transmembrane domain) with TMEM203. Interacts with DDX41. Interacts with TMEM120A (via C-terminal domain); regulates the trafficking of STING1 from the ER to the ER-Golgi intermediate compartment to elicit antiviral effects. As to quaternary structure, (Microbial infection) Interacts with human papillomavirus (HPV) protein E7. (Microbial infection) Interacts with adenovirus early E1A protein. In terms of assembly, (Microbial infection) Interacts with herpes simplex virus 1 protein ICP34.5; this interaction inhibits the intracellular DNA sensing pathway. As to quaternary structure, (Microbial infection) Interacts with Chikungunya virus non-structural protein 1; this interaction results in inhibition of cGAS-STING signaling and increased levels of palmitoylated nsP1 and protein stabilization. (Microbial infection) Interacts with human cytomegalovirus proteins UL94, UL42 and UL138; these interactions result in the inhibition of cGAS-STING signaling. In terms of assembly, (Microbial infection) Interacts with varivella virus protein 39; this interaction results in the inhibition of cGAS-STING signaling. Phosphorylation by TBK1 leads to activation and production of IFN-beta. Following cyclic nucleotide (c-di-GMP or cGAMP)-binding, activation and translocation from the endoplasmic reticulum, STING1 is phosphorylated by TBK1 at Ser-366 in the pLxIS motif. The phosphorylated pLxIS motif constitutes an IRF3-binding motif, leading to recruitment of the transcription factor IRF3 to induce type-I interferons and other cytokines. The phosphorylated pLxIS motif facilitates SENP2 recruitment during late phase of viral infection. Phosphorylated on tyrosine residues upon MHC-II aggregation. Dephosphorylation by PPP6C leads to inactivation and decreased production of IFN-beta. Phosphorylation at Ser-358 is also required to activate IRF3. Phosphorylation at Ser-355 by MAP3K7/TAK1 facilitates its interaction with STEEP1, promoting STING1 translocation to COPII vesicles. In terms of processing, ubiquitinated. Ubiquitinated via 'Lys-63'-linked ubiquitin chains in response to double-stranded DNA treatment, leading to relocalization to autophagosomes and subsequent degradation; this process is dependent on SQSTM1. 'Lys-63'-linked ubiquitination mediated by TRIM56 at Lys-150 promotes homodimerization and recruitment of the antiviral kinase TBK1 and subsequent production of IFN-beta. 'Lys-48'-linked polyubiquitination at Lys-150 occurring after viral infection is mediated by RNF5 and leads to proteasomal degradation. 'Lys-11'-linked polyubiquitination at Lys-150 by RNF26 leads to stabilize STING1: it protects STING1 from RNF5-mediated 'Lys-48'-linked polyubiquitination. 'Lys-33'-linked and 'Lys-48'-linked deubiquitinated by USP20; leading to its stabilization and promotion of innate antiviral response. 'Lys-48'-linked deubiquitinated by USP44; leading to its stabilization and promotion of innate antiviral response. Deubiquitinated by USP13; leading to inhibition of innate antiviral response. 'Lys-63'-linked deubiquitinated by USP49; leading to inhibition of the subsequent recruitment of TBK1 to the signaling complex. 'Lys-63'-linked ubiquitination mediated by RNF39 promotes the activation of the cGAS-STING pathway. MARCHF5-mediated ubiquitination prevents the oxidation-induced polymer formation. Post-translationally, (Microbial infection) Deubiquitinated by Epstein-Barr virus BPLF1 on both 'Lys-48' and 'Lys-63'-linked ubiquitin chains; leading to inhibition of cGAS-STING signaling. Sumoylated at Lys-338 by TRIM38 during the early phase of viral infection, promoting its stability by preventing its relocalization to autophagosomes and subsequent degradation. Desumoylated by SENP2 during the late phase of viral infection. In terms of processing, palmitoylation takes place in the Golgi apparatus and creates a platform for the recruitment of TBK1. As to expression, ubiquitously expressed. Expressed in skin endothelial cells, alveolar type 2 pneumocytes, bronchial epithelium and alveolar macrophages.

The protein resides in the endoplasmic reticulum membrane. The protein localises to the cytoplasm. It localises to the perinuclear region. It is found in the endoplasmic reticulum-Golgi intermediate compartment membrane. Its subcellular location is the golgi apparatus membrane. The protein resides in the cytoplasmic vesicle. The protein localises to the autophagosome membrane. It localises to the mitochondrion outer membrane. It is found in the cell membrane. The enzyme catalyses H(+)(in) = H(+)(out). With respect to regulation, activated upon binding to the hydrolysis-resistant 2'3'-cG(s)A(s)MP, an analog of cGAMP, in which phosphodiester linkages are replaced by phosphothioate linkages. Specifically inhibited by small-molecule H-151 (N-(4-ethylphenyl)-N'-1H-indol-3-yl-urea), which covalently binds Cys-91 and prevents palmitoylation and subsequent activation of STING1. In contrast to mouse protein, not activated by anticancer molecule 5,6-dimethylxanthenone 4-acetic acid (DMXAA). Inhibited by compound 18 ([(3S,4S)-2-(4-tert-butyl-3-chlorophenyl)-3-(2,3-dihydro-1,4-benzodioxin-6-yl)-7-fluoro-1-oxo-1,2,3,4-tetrahydroisoquinolin-4-yl]acetate), a competitive inhibitor with slow dissociation kinetics and good oral bioavailability. Homooligomerization and ability to promote the production of type I interferons is activated by C53, a small benzothiazinone-like compound that binds to the transmembrane regions. in the area of the putative pore. In contrast, compound C53, directly inhibits the proton channel activity and facilitate MAP1LC3B/LC3B lipidation and autophagosome formation. Its function is as follows. Facilitator of innate immune signaling that acts as a sensor of cytosolic DNA from bacteria and viruses and promotes the production of type I interferon (IFN-alpha and IFN-beta). Innate immune response is triggered in response to non-CpG double-stranded DNA from viruses and bacteria delivered to the cytoplasm. Acts by binding cyclic dinucleotides: recognizes and binds cyclic di-GMP (c-di-GMP), a second messenger produced by bacteria, cyclic UMP-AMP (2',3'-cUAMP), and cyclic GMP-AMP (cGAMP), a messenger produced by CGAS in response to DNA virus in the cytosol. Upon binding to c-di-GMP, cUAMP or cGAMP, STING1 oligomerizes, translocates from the endoplasmic reticulum and is phosphorylated by TBK1 on the pLxIS motif, leading to recruitment and subsequent activation of the transcription factor IRF3 to induce expression of type I interferon and exert a potent anti-viral state. Exhibits 2',3' phosphodiester linkage-specific ligand recognition: can bind both 2'-3' linked cGAMP (2'-3'-cGAMP) and 3'-3' linked cGAMP but is preferentially activated by 2'-3' linked cGAMP. The preference for 2'-3'-cGAMP, compared to other linkage isomers is probably due to the ligand itself, whichs adopts an organized free-ligand conformation that resembles the STING1-bound conformation and pays low energy costs in changing into the active conformation. In addition to promote the production of type I interferons, plays a direct role in autophagy. Following cGAMP-binding, STING1 buds from the endoplasmic reticulum into COPII vesicles, which then form the endoplasmic reticulum-Golgi intermediate compartment (ERGIC). The ERGIC serves as the membrane source for WIPI2 recruitment and LC3 lipidation, leading to formation of autophagosomes that target cytosolic DNA or DNA viruses for degradation by the lysosome. Promotes autophagy by acting as a proton channel that directs proton efflux from the Golgi to facilitate MAP1LC3B/LC3B lipidation. The autophagy- and interferon-inducing activities can be uncoupled and autophagy induction is independent of TBK1 phosphorylation. Autophagy is also triggered upon infection by bacteria: following c-di-GMP-binding, which is produced by live Gram-positive bacteria, promotes reticulophagy. May be involved in translocon function, the translocon possibly being able to influence the induction of type I interferons. May be involved in transduction of apoptotic signals via its association with the major histocompatibility complex class II (MHC-II). (Microbial infection) Antiviral activity is antagonized by oncoproteins, such as papillomavirus (HPV) protein E7 and adenovirus early E1A protein. Such oncoproteins prevent the ability to sense cytosolic DNA. In Homo sapiens (Human), this protein is Stimulator of interferon genes protein.